We begin with the raw amino-acid sequence, 516 residues long: Exodeoxyribonuclease 7 large subunit (516 aa).

The protein belongs to the XseA family. In terms of assembly, heterooligomer composed of large and small subunits.

The protein resides in the cytoplasm. It carries out the reaction Exonucleolytic cleavage in either 5'- to 3'- or 3'- to 5'-direction to yield nucleoside 5'-phosphates.. Bidirectionally degrades single-stranded DNA into large acid-insoluble oligonucleotides, which are then degraded further into small acid-soluble oligonucleotides. The polypeptide is Exodeoxyribonuclease 7 large subunit (Chlamydia trachomatis serovar A (strain ATCC VR-571B / DSM 19440 / HAR-13)).